The chain runs to 351 residues: Phospho-N-acetylmuramoyl-pentapeptide-transferase (351 aa).

10 consecutive transmembrane segments (helical) span residues 22–42 (ILAF…FISW), 65–85 (TPTM…LITT), 87–107 (FNKY…LGFI), 128–148 (FLLQ…VGFD), 158–178 (YPIF…IVAM), 190–210 (GLAT…LYIV), 225–245 (LGVG…LGFL), 254–274 (VFMG…LAIV), 279–299 (LLLI…ILQV), and 328–348 (KITI…ILSI).

Belongs to the glycosyltransferase 4 family. MraY subfamily. Mg(2+) is required as a cofactor.

The protein localises to the cell inner membrane. The catalysed reaction is UDP-N-acetyl-alpha-D-muramoyl-L-alanyl-gamma-D-glutamyl-meso-2,6-diaminopimeloyl-D-alanyl-D-alanine + di-trans,octa-cis-undecaprenyl phosphate = di-trans,octa-cis-undecaprenyl diphospho-N-acetyl-alpha-D-muramoyl-L-alanyl-D-glutamyl-meso-2,6-diaminopimeloyl-D-alanyl-D-alanine + UMP. Its pathway is cell wall biogenesis; peptidoglycan biosynthesis. Catalyzes the initial step of the lipid cycle reactions in the biosynthesis of the cell wall peptidoglycan: transfers peptidoglycan precursor phospho-MurNAc-pentapeptide from UDP-MurNAc-pentapeptide onto the lipid carrier undecaprenyl phosphate, yielding undecaprenyl-pyrophosphoryl-MurNAc-pentapeptide, known as lipid I. This is Phospho-N-acetylmuramoyl-pentapeptide-transferase from Nautilia profundicola (strain ATCC BAA-1463 / DSM 18972 / AmH).